A 150-amino-acid polypeptide reads, in one-letter code: SKP1-like protein 17 (150 aa).

The interaction with the F-box domain of F-box proteins stretch occupies residues 92–150; the sequence is LDAADYLIVIGLKNLIAQAIADYTADKTVNEIRELFNIENDYTPEEEEELRKKNEWAFN.

It belongs to the SKP1 family. As to quaternary structure, part of a SCF (SKP1-cullin-F-box) protein ligase complex. Interacts with CPR1/CPR30. As to expression, mainly detected in the siliques.

It localises to the nucleus. It functions in the pathway protein modification; protein ubiquitination. Functionally, involved in ubiquitination and subsequent proteasomal degradation of target proteins. Together with CUL1, RBX1 and a F-box protein, it forms a SCF E3 ubiquitin ligase complex. The functional specificity of this complex depends on the type of F-box protein. In the SCF complex, it serves as an adapter that links the F-box protein to CUL1. Probably implicated in incompatibility response after hybridization. In Arabidopsis thaliana (Mouse-ear cress), this protein is SKP1-like protein 17 (ASK17).